The chain runs to 1341 residues: Aldehyde oxidase 4 (1341 aa).

Residues 8–95 (DELIFFVNGK…GAAVTTVEGV (88 aa)) form the 2Fe-2S ferredoxin-type domain. The [2Fe-2S] cluster site is built by Cys-47, Cys-52, Cys-55, and Cys-77. Gln-116 serves as a coordination point for Mo-molybdopterin. Residues Cys-117, Cys-120, Cys-152, and Cys-154 each coordinate [2Fe-2S] cluster. Cys-154 is a Mo-molybdopterin binding site. Residues 239-424 (FQGERTTWLA…LSVFIPYSSQ (186 aa)) enclose the FAD-binding PCMH-type domain. Residues 267 to 274 (LIMGNTTV), Ala-348, Thr-357, His-361, Asp-370, and Val-414 contribute to the FAD site. Mo-molybdopterin contacts are provided by residues Ala-805, 805-806 (AF), Leu-1046, 1087-1090 (GSMG), Gln-1202, and Leu-1266. The Proton acceptor; for azaheterocycle hydroxylase activity role is filled by Glu-1268.

Belongs to the xanthine dehydrogenase family. As to quaternary structure, homodimer. [2Fe-2S] cluster serves as cofactor. FAD is required as a cofactor. It depends on Mo-molybdopterin as a cofactor. Detected in liver, testis, kidney, brain, Harderian gland and olfactory mucosa.

It localises to the cytoplasm. It carries out the reaction an aldehyde + O2 + H2O = a carboxylate + H2O2 + H(+). The catalysed reaction is retinal + O2 + H2O = retinoate + H2O2 + H(+). Aldehyde oxidase able to catalyze the oxidation of retinaldehyde into retinoate. Acts as a negative modulator of the epidermal trophism. May be able to oxidize a wide variety of aldehydes into their corresponding carboxylates and to hydroxylate azaheterocycles. The sequence is that of Aldehyde oxidase 4 (AOX4) from Cavia porcellus (Guinea pig).